A 203-amino-acid chain; its full sequence is Linker for activation of T-cells family member 2 (203 aa).

The Extracellular segment spans residues 1-6; that stretch reads MSAELE. Residues 7 to 27 form a helical; Signal-anchor for type III membrane protein membrane-spanning segment; sequence LLWPVSGLLLLLLGATAWLCV. S-palmitoyl cysteine attachment occurs at residues cysteine 26 and cysteine 29. The Cytoplasmic portion of the chain corresponds to 28 to 203; that stretch reads HCSRPGVKRN…NGDVAAAENI (176 aa). Tyrosine 59 is subject to Phosphotyrosine. Phosphoserine is present on residues serine 60 and serine 95. A phosphotyrosine mark is found at tyrosine 139, tyrosine 160, and tyrosine 192. The tract at residues 171-203 is disordered; sequence ESKRTMGAPMSLSGSPDEEPDYVNGDVAAAENI.

In terms of assembly, when phosphorylated, interacts with GRB2. May also interact with SOS1, GAB1 and CBL. Post-translationally, phosphorylated on tyrosines following cross-linking of BCR in B-cells, high affinity IgG receptor (FCGR1) in myeloid cells, or high affinity IgE receptor (FCER1) in mast cells; which induces the recruitment of GRB2. Strongly expressed in testis. Expressed in heart, spleen and lung. Present in B-cells and mast cells (at protein level).

It is found in the cell membrane. Its function is as follows. Involved in FCER1 (high affinity immunoglobulin epsilon receptor)-mediated signaling in mast cells. May also be involved in BCR (B-cell antigen receptor)-mediated signaling in B-cells and FCGR1 (high affinity immunoglobulin gamma Fc receptor I)-mediated signaling in myeloid cells. Couples activation of these receptors and their associated kinases with distal intracellular events through the recruitment of GRB2. The polypeptide is Linker for activation of T-cells family member 2 (Lat2) (Mus musculus (Mouse)).